Reading from the N-terminus, the 850-residue chain is Tripartite terminase subunit 1 (850 aa).

A C3H1-type zinc finger spans residues 191–219; the sequence is CAQCYEELTIIPNQGRSLNKRLQGLLCNH. A disordered region spans residues 438–489; the sequence is GTTLMTASNSSNSSTHSQRNNGGGGRARGGGKKVVGGGVNGQDGDGSENGLR. Residues 439–457 show a composition bias toward low complexity; it reads TTLMTASNSSNSSTHSQRN. Over residues 458 to 481 the composition is skewed to gly residues; it reads NGGGGRARGGGKKVVGGGVNGQDG. 709 to 716 lines the ATP pocket; sequence YNETFGKQ. Residues 801-831 are disordered; sequence WLPSPYPSSSTAGVSRRVRATRKRPRRASSL. Positions 816 to 827 are enriched in basic residues; it reads RRVRATRKRPRR. Residues 822–827 carry the Nuclear localization signal motif; that stretch reads RKRPRR.

This sequence belongs to the herpesviridae TRM1 protein family. As to quaternary structure, associates with TRM2 and TRM3 to form the tripartite terminase complex. Interacts with portal protein.

The protein localises to the host nucleus. In terms of biological role, component of the molecular motor that translocates viral genomic DNA in empty capsid during DNA packaging. Forms a tripartite terminase complex together with TRM2 and TRM3 in the host cytoplasm. Once the complex reaches the host nucleus, it interacts with the capsid portal vertex. This portal forms a ring in which genomic DNA is translocated into the capsid. TRM1 carries an endonuclease activity that plays an important role for the cleavage of concatemeric viral DNA into unit length genomes. This is Tripartite terminase subunit 1 from Homo sapiens (Human).